The primary structure comprises 354 residues: Arginase-2, mitochondrial (354 aa).

The transit peptide at 1-22 (MSYGSCVSRLLRTRVQSVLKKS) directs the protein to the mitochondrion. The Mn(2+) site is built by histidine 120, aspartate 143, histidine 145, and aspartate 147. Residues 145-149 (HADIN), 156-158 (SGN), and aspartate 202 contribute to the substrate site. Residues aspartate 251 and aspartate 253 each coordinate Mn(2+). The substrate site is built by threonine 265 and glutamate 296. The interval 330–354 (GHTVYEQLPPPSSPHESENAERVRI) is disordered. Residues 344 to 354 (HESENAERVRI) are compositionally biased toward basic and acidic residues.

The protein belongs to the arginase family. As to quaternary structure, homotrimer. It depends on Mn(2+) as a cofactor.

It localises to the mitochondrion. The catalysed reaction is L-arginine + H2O = urea + L-ornithine. It participates in nitrogen metabolism; urea cycle; L-ornithine and urea from L-arginine: step 1/1. May play a role in the regulation of extra-urea cycle arginine metabolism and also in down-regulation of nitric oxide synthesis. Extrahepatic arginase functions to regulate L-arginine bioavailability to nitric oxid synthase (NOS). Arginine metabolism is a critical regulator of innate and adaptive immune responses. Seems to be involved in negative regulation of the survival capacity of activated T cells. May suppress inflammation-related signaling in asthmatic airway epithelium. May play a role in promoting prenatal immune suppression. Regulates RPS6KB1 signaling, which promotes endothelial cell senescence and inflammation and implicates NOS3/eNOS dysfunction. Can inhibit endothelial autophagy independently of its enzymatic activity implicating mTORC2 signaling. Involved in vascular smooth muscle cell senescence and apoptosis independently of its enzymatic activity. This chain is Arginase-2, mitochondrial (ARG2), found in Oryctolagus cuniculus (Rabbit).